The following is a 1522-amino-acid chain: Sodium channel protein 1 brain (1522 aa).

Topologically, residues 1 to 50 are cytoplasmic; the sequence is MDEKYTAKNRDKTFVVIEKRFKKNIIHRFSAKRSLFLFTPRNPIRRLAVC. The stretch at 41-342 is one I repeat; sequence RNPIRRLAVC…VATAYELEVK (302 aa). A helical transmembrane segment spans residues 51 to 70; that stretch reads IATNVCFDYFLMFTIMINCV. At 71–77 the chain is on the extracellular side; that stretch reads FLAMPDI. A helical transmembrane segment spans residues 78–99; sequence SEFAEYIFLGIYTMEMAIKLVA. Topologically, residues 100-112 are cytoplasmic; the sequence is GGFFIDKYTYLRD. Residues 113–134 form a helical membrane-spanning segment; sequence AWNCLDFTVIMISYITLLLQTI. The Extracellular portion of the chain corresponds to 135–143; that stretch reads NDKVISDIT. Residues 144–167 form a helical; Voltage-sensor membrane-spanning segment; it reads GLRTFRVLRALRTLSIIPGLKTMV. Residues 168-179 are Cytoplasmic-facing; it reads NALLRALRMLIS. The helical transmembrane segment at 180 to 201 threads the bilayer; it reads VLILILFCLWIFSQAGVQLFGG. The Extracellular segment spans residues 202–278; that stretch reads ALRHKCVLQI…PNYGYTNFDS (77 aa). An intrachain disulfide couples cysteine 207 to cysteine 255. Residues asparagine 248 and asparagine 258 are each glycosylated (N-linked (GlcNAc...) asparagine). An intramembrane region (pore-forming) is located at residues 279–303; sequence IGWSMLISFQLLTQDYWEDVYNKVI. Over 304–308 the chain is Extracellular; that stretch reads RAHSP. The chain crosses the membrane as a helical span at residues 309–331; sequence WTVIYFIVINFFGSLYLMNLMLA. Residues 332–406 lie on the Cytoplasmic side of the membrane; sequence VVATAYELEV…WLRVQSFAHC (75 aa). One copy of the II repeat lies at 393-647; sequence CYNPWLRVQS…EQEVEVSSFA (255 aa). Residues 407–426 traverse the membrane as a helical segment; that stretch reads IITDSFTEVFIIFIIVLNTV. Residues 427–442 are Extracellular-facing; the sequence is FLAMEHHGMSMELKNV. The chain crosses the membrane as a helical span at residues 443 to 464; it reads LKVANYVFTTVFVLEAILKLLA. Topologically, residues 465 to 472 are cytoplasmic; the sequence is FNKQYFKS. Residues 473 to 491 form a helical membrane-spanning segment; the sequence is GWNICDLVVVVASLIDLGV. Residues 492-498 lie on the Extracellular side of the membrane; that stretch reads EGLKGVS. A helical; Voltage-sensor transmembrane segment spans residues 499–522; that stretch reads VFRSFRLLRVFHLAQSWTTMRLLL. The Cytoplasmic portion of the chain corresponds to 523-531; it reads CIILNTLGS. Residues 532–553 traverse the membrane as a helical segment; that stretch reads LGYLTIILIIVIYIFAVTGLQL. At 554–575 the chain is on the extracellular side; sequence FHTEYTPDKFRGEPVPRWNFND. The pore-forming intramembrane region spans 576–596; that stretch reads FLHSFMMVFRILCGEWIEPMY. Residues 597-607 are Extracellular-facing; it reads DCMRACNGLCF. Residues cysteine 598 and cysteine 606 are joined by a disulfide bond. A helical transmembrane segment spans residues 608-628; that stretch reads LIFIPVTVFGKTLFFLFIGLV. The Cytoplasmic segment spans residues 629-777; sequence LGAFGSDTVE…WNNFRRQLMM (149 aa). Residues 770 to 1074 form an III repeat; it reads NFRRQLMMVC…QNYYNTLKKL (305 aa). Residues 778-797 form a helical membrane-spanning segment; the sequence is VCENKYFETGVLVIIFASSI. Over 798 to 815 the chain is Extracellular; it reads LLAFEDIYLNEKPRLKLA. Residues 816 to 837 form a helical membrane-spanning segment; that stretch reads IFYLDITFCLLFFLEMVLKLVA. Topologically, residues 838 to 846 are cytoplasmic; it reads LGFVHYYTH. Residues 847–868 form a helical membrane-spanning segment; it reads FWTILDFTIVIITVISLAASGL. Residues 869–874 lie on the Extracellular side of the membrane; that stretch reads GMEQIT. Residues 875-898 traverse the membrane as a helical; Voltage-sensor segment; sequence AFRSLRTLRALRPLRAVSRWQGMK. Residues 899-915 lie on the Cytoplasmic side of the membrane; it reads IIVNALMLSIPSIFNVL. A helical membrane pass occupies residues 916–937; that stretch reads LVCVVFWLIFAIMGVQLFAGKF. The Extracellular segment spans residues 938 to 976; sequence YKCVNETNMRIPPTEVANKIECYNKNYTWVNSNVNFDNV. Asparagine 942 and asparagine 963 each carry an N-linked (GlcNAc...) asparagine glycan. The segment at residues 977–998 is an intramembrane region (pore-forming); that stretch reads GGAFLALFQVATFEGWMEIMAD. Topologically, residues 999 to 1009 are extracellular; sequence AVDVTEVDEQP. The chain crosses the membrane as a helical span at residues 1010–1022; the sequence is KFEATVYYYFYFV. The Cytoplasmic portion of the chain corresponds to 1023 to 1100; sequence LFIIFGSFFV…QAVVYDLVMS (78 aa). A Phosphothreonine; by PKC modification is found at threonine 1076. The stretch at 1083-1386 is one IV repeat; sequence VKRPKNKCQA…WEQYDPLATQ (304 aa). The helical transmembrane segment at 1101–1120 threads the bilayer; sequence NQFEIFITTIIITNMIFMAF. At 1121 to 1132 the chain is on the extracellular side; it reads EHYNQSEVVTEV. N-linked (GlcNAc...) asparagine glycosylation occurs at asparagine 1124. A helical membrane pass occupies residues 1133-1154; that stretch reads LATANIAFTILYAVEAIIKIIG. Residues 1155 to 1162 lie on the Cytoplasmic side of the membrane; that stretch reads LRIHYLRN. Residues 1163-1184 traverse the membrane as a helical segment; it reads LWNVFDFLVVTLSVMDAFLNDI. Residues 1185–1194 are Extracellular-facing; that stretch reads FGDGIFMNPS. Residues 1195–1218 form a helical; Voltage-sensor membrane-spanning segment; that stretch reads LLRVARMFRIGRIIRLIKWAKGMR. At 1219 to 1236 the chain is on the cytoplasmic side; that stretch reads KLLFALVISLPALFNIGA. Residues 1237-1258 form a helical membrane-spanning segment; it reads LLMLVMFIYTIIGMSSFGQIKL. The Extracellular segment spans residues 1259-1270; it reads SGALNDQVNFQT. Residues 1271–1293 constitute an intramembrane region (pore-forming); the sequence is FGKTFLLLVRLATSAGWNDILGP. Over 1294–1323 the chain is Extracellular; that stretch reads LLIQPPNCDPNYITTSTGEKIKVVNGDCGM. A helical membrane pass occupies residues 1324 to 1346; that stretch reads PWLAISYMVSYIIIVFMIVFNMY. Over 1347-1522 the chain is Cytoplasmic; sequence IAVILENFNQ…FIISAPETAV (176 aa).

The protein belongs to the sodium channel (TC 1.A.1.10) family.

It is found in the cell membrane. Mediates the voltage-dependent sodium ion permeability of excitable membranes. Assuming opened or closed conformations in response to the voltage difference across the membrane, the protein forms a sodium-selective channel through which Na(+) ions may pass in accordance with their electrochemical gradient. This is Sodium channel protein 1 brain from Heterololigo bleekeri (Spear squid).